A 100-amino-acid chain; its full sequence is uncharacterized protein (100 aa).

Helical transmembrane passes span 7-28, 38-60, and 65-87; these read TLIGLIVGLLFGLSGIATLLSL, AQLSQLGVASTLVMLVIALILII, and LSALIVGAVIGAVLNLVLQANGV.

It localises to the cell membrane. This is an uncharacterized protein from Archaeoglobus fulgidus (strain ATCC 49558 / DSM 4304 / JCM 9628 / NBRC 100126 / VC-16).